The chain runs to 482 residues: Anaerobic nitric oxide reductase flavorubredoxin (482 aa).

Residues 30–210 (LRGSSYNSYL…PFSRLVTPKI (181 aa)) form a zinc metallo-hydrolase region. Fe cation contacts are provided by histidine 79, glutamate 81, aspartate 83, histidine 147, aspartate 166, and histidine 227. One can recognise a Flavodoxin-like domain in the interval 254 to 393 (ITIFYDTMSN…LCRQHGRDIA (140 aa)). FMN is bound by residues 260-264 (TMSNN) and 342-369 (AFGS…EMSL). In terms of domain architecture, Rubredoxin-like spans 426-477 (GPSMQCSVCQWIYDPAKGEPLQDVAPGTPWSDVPDNFLCPECSLGKDVFDVL). Fe cation contacts are provided by cysteine 431, cysteine 434, cysteine 464, and cysteine 467.

It in the N-terminal section; belongs to the zinc metallo-hydrolase group 3 family. Homotetramer. Requires Fe cation as cofactor. FMN serves as cofactor.

Its subcellular location is the cytoplasm. Its pathway is nitrogen metabolism; nitric oxide reduction. Its function is as follows. Anaerobic nitric oxide reductase; uses NADH to detoxify nitric oxide (NO), protecting several 4Fe-4S NO-sensitive enzymes. Has at least 2 reductase partners, only one of which (NorW, flavorubredoxin reductase) has been identified. NO probably binds to the di-iron center; electrons enter from the NorW at rubredoxin and are transferred sequentially to the FMN center and the di-iron center. Also able to function as an aerobic oxygen reductase. The chain is Anaerobic nitric oxide reductase flavorubredoxin from Citrobacter koseri (strain ATCC BAA-895 / CDC 4225-83 / SGSC4696).